Reading from the N-terminus, the 266-residue chain is Thiazole synthase (266 aa).

Residue Lys-95 is the Schiff-base intermediate with DXP of the active site. 1-deoxy-D-xylulose 5-phosphate contacts are provided by residues Gly-156, 182–183 (AG), and 204–205 (NT).

The protein belongs to the ThiG family. Homotetramer. Forms heterodimers with either ThiH or ThiS.

Its subcellular location is the cytoplasm. It catalyses the reaction [ThiS sulfur-carrier protein]-C-terminal-Gly-aminoethanethioate + 2-iminoacetate + 1-deoxy-D-xylulose 5-phosphate = [ThiS sulfur-carrier protein]-C-terminal Gly-Gly + 2-[(2R,5Z)-2-carboxy-4-methylthiazol-5(2H)-ylidene]ethyl phosphate + 2 H2O + H(+). It participates in cofactor biosynthesis; thiamine diphosphate biosynthesis. Catalyzes the rearrangement of 1-deoxy-D-xylulose 5-phosphate (DXP) to produce the thiazole phosphate moiety of thiamine. Sulfur is provided by the thiocarboxylate moiety of the carrier protein ThiS. In vitro, sulfur can be provided by H(2)S. The chain is Thiazole synthase from Shewanella denitrificans (strain OS217 / ATCC BAA-1090 / DSM 15013).